The primary structure comprises 582 residues: Calcium-dependent protein kinase 24 (582 aa).

The disordered stretch occupies residues 1 to 36 (MGSCVSSPLKGSPFGKRPVRRRHSSNSRTSSVPRFD). Glycine 2 is lipidated: N-myristoyl glycine. One can recognise a Protein kinase domain in the interval 66–324 (YDLGKELGRG…VQEVLEHPWI (259 aa)). Residues 72–80 (LGRGEFGVT) and lysine 95 each bind ATP. Aspartate 190 functions as the Proton acceptor in the catalytic mechanism. Residue serine 230 is modified to Phosphoserine. Residues 330 to 360 (APNVNLGDNVRTKIQQFLLMNRFKKKVLRIV) are autoinhibitory domain. EF-hand domains are found at residues 367–402 (EEIA…IGQV), 403–438 (VPDG…LKRM), 439–474 (GCDE…DKLG), and 478–513 (GNDQ…GTDW). Residues aspartate 380, aspartate 382, asparagine 384, histidine 386, glutamate 391, aspartate 416, aspartate 418, asparagine 420, methionine 422, glutamate 427, aspartate 452, asparagine 454, asparagine 456, glutamate 463, aspartate 491, asparagine 493, aspartate 495, and arginine 497 each coordinate Ca(2+). Serine 499 is modified (phosphoserine). Glutamate 502 serves as a coordination point for Ca(2+).

This sequence belongs to the protein kinase superfamily. Ser/Thr protein kinase family. CDPK subfamily.

Its subcellular location is the membrane. It carries out the reaction L-seryl-[protein] + ATP = O-phospho-L-seryl-[protein] + ADP + H(+). The enzyme catalyses L-threonyl-[protein] + ATP = O-phospho-L-threonyl-[protein] + ADP + H(+). Its activity is regulated as follows. Activated by calcium. Autophosphorylation may play an important role in the regulation of the kinase activity. Functionally, may play a role in signal transduction pathways that involve calcium as a second messenger. The chain is Calcium-dependent protein kinase 24 (CPK24) from Arabidopsis thaliana (Mouse-ear cress).